A 438-amino-acid chain; its full sequence is Glutamate-1-semialdehyde 2,1-aminomutase (438 aa).

N6-(pyridoxal phosphate)lysine is present on Lys277.

The protein belongs to the class-III pyridoxal-phosphate-dependent aminotransferase family. HemL subfamily. As to quaternary structure, homodimer. Requires pyridoxal 5'-phosphate as cofactor.

Its subcellular location is the cytoplasm. It catalyses the reaction (S)-4-amino-5-oxopentanoate = 5-aminolevulinate. Its pathway is porphyrin-containing compound metabolism; protoporphyrin-IX biosynthesis; 5-aminolevulinate from L-glutamyl-tRNA(Glu): step 2/2. It participates in porphyrin-containing compound metabolism; chlorophyll biosynthesis. This Synechococcus sp. (strain CC9311) protein is Glutamate-1-semialdehyde 2,1-aminomutase.